The primary structure comprises 815 residues: RNA-binding protein 5 (815 aa).

The interval 1–93 (MGSDKRVSRT…EHDYRHDISD (93 aa)) is disordered. Phosphoserine is present on residues S18, S59, S69, S72, and S78. The region spanning 98-178 (KTIMLRGLPI…KHIAMHYSNP (81 aa)) is the RRM 1 domain. The segment at 181–210 (KFEDWLCNKCCLNNFRKRLKCFRCGADKFD) adopts a RanBP2-type zinc-finger fold. The region spanning 231–315 (DTIILRNIAP…KTIGVDFAKS (85 aa)) is the RRM 2 domain. The segment at 321–809 (VLSDGNRVSA…KDAVRKAMFA (489 aa)) is required for interaction with U2AF2. Residues 411-422 (QSPQLYNQTSNP) are compositionally biased toward polar residues. Disordered stretches follow at residues 411 to 468 (QSPQ…DESS) and 507 to 540 (PAAE…AQQI). Residues 426–446 (PTEEAQPSTSTSTQAPAASPT) show a composition bias toward low complexity. Phosphoserine is present on S444. The sufficient for interaction with ACIN1, PRPF8, SFRS3, SNRPB, SNRPN, SNRNP70 and SNRNP200 stretch occupies residues 452–535 (TKYAVPDTST…KEKKEKPKSK (84 aa)). Phosphoserine is present on residues S621 and S624. A C2H2-type; atypical zinc finger spans residues 647–677 (MACLLCRRQFPNKDALVRHQQLSDLHKQNMD). Residues 743 to 789 (HSNIGNKMLQAMGWREGSGLGRKCQGITAPIEAQVRLKGAGLGAKGS) enclose the G-patch domain.

Belongs to the RBM5/RBM10 family. Component of the spliceosome A complex (also known as the prespliceosome). Appears to dissociate from the spliceosome upon formation of the spliceosome B complex (also known as the precatalytic spliceosome), in which the heterotrimeric U4/U6.U5 snRNPs are bound. Interacts with U2AF2; this interaction is direct. Also interacts with ACIN1, PRPF8, SFRS3, SNRPB, SNRPN, SNRNP70 and SNRNP200; these interactions may be indirect. Isoform 5 is widely expressed in normal tissues and is expressed at increased levels in T-leukemic cell lines.

The protein resides in the nucleus. In terms of biological role, component of the spliceosome A complex. Binds to ssRNA containing the consensus sequence 5'-AGGUAA-3'. Regulates alternative splicing of a number of mRNAs. May modulate splice site pairing after recruitment of the U1 and U2 snRNPs to the 5' and 3' splice sites of the intron. May both positively and negatively regulate apoptosis by regulating the alternative splicing of several genes involved in this process, including FAS and CASP2/caspase-2. In the case of FAS, promotes exclusion of exon 6 thereby producing a soluble form of FAS that inhibits apoptosis. In the case of CASP2/caspase-2, promotes exclusion of exon 9 thereby producing a catalytically active form of CASP2/Caspase-2 that induces apoptosis. In Homo sapiens (Human), this protein is RNA-binding protein 5 (RBM5).